The chain runs to 509 residues: 2-isopropylmalate synthase (509 aa).

The Pyruvate carboxyltransferase domain maps to 5 to 267 (IQIFDTTLRD…QTALNLEETK (263 aa)). Positions 14, 202, 204, and 238 each coordinate Mn(2+). Residues 391 to 509 (KLETLQLQYV…AAENVEKVGN (119 aa)) form a regulatory domain region.

It belongs to the alpha-IPM synthase/homocitrate synthase family. LeuA type 1 subfamily. Homodimer. The cofactor is Mn(2+).

Its subcellular location is the cytoplasm. The catalysed reaction is 3-methyl-2-oxobutanoate + acetyl-CoA + H2O = (2S)-2-isopropylmalate + CoA + H(+). It functions in the pathway amino-acid biosynthesis; L-leucine biosynthesis; L-leucine from 3-methyl-2-oxobutanoate: step 1/4. Its function is as follows. Catalyzes the condensation of the acetyl group of acetyl-CoA with 3-methyl-2-oxobutanoate (2-ketoisovalerate) to form 3-carboxy-3-hydroxy-4-methylpentanoate (2-isopropylmalate). The chain is 2-isopropylmalate synthase from Staphylococcus aureus (strain MRSA252).